The sequence spans 557 residues: MPPRLRPLLLRVSLWVLVGSSSPALLHDRSKENGLQLPRLCKFCDVKATTCSNQDQCKSNCNITSICEKNNEVCAAVWRRNDENVTLETICHDPQKRLYGHMLDDSSSEQCVMKEKKDDGGLMFMCSCTGEECNDVLIFSAIDPHKPEEKDEISKVTIISLVPLLVISVAVIVIFYAYRTHKKRKLNKAWEKNVKPKKHKDCSDVCAIMLDDDHSDISSTCANNINHNTELLPIELDIVVGKGRFAEVYKAKLKQNTSEQYETVAVKIFPYEEYASWKTEKDIFSDVNLKHENILQFLTAEERKTDLGKQYWLITAFHARGNLQEYLTRHIISWEDLWKLGGSLARGIAHLHSDHTPCGRPKTPIVHRDLKSSNILVKNDLTCCLCDFGLSLRLDPSLSVDDLANSGQVGTARYMAPEVLESRMNLENMESFKQTDVYSMALVLWEMTSRCNGVGEVKEYEPPFGSKVREHPCVESMKDNVLRDRGRPEIPSSWLNHQGIQMVCETLIECWDHDPEARLTAQCVAERFSEFKHHDKLSGRSCSEEKIPEDGSVTTAK.

The signal sequence occupies residues 1-23 (MPPRLRPLLLRVSLWVLVGSSSP). Topologically, residues 24–155 (ALLHDRSKEN…KPEEKDEISK (132 aa)) are extracellular. 6 disulfide bridges follow: Cys-41–Cys-74, Cys-44–Cys-61, Cys-51–Cys-57, Cys-67–Cys-91, Cys-111–Cys-126, and Cys-128–Cys-133. N-linked (GlcNAc...) asparagine glycans are attached at residues Asn-62 and Asn-84. The chain crosses the membrane as a helical span at residues 156-176 (VTIISLVPLLVISVAVIVIFY). The Cytoplasmic segment spans residues 177–557 (AYRTHKKRKL…PEDGSVTTAK (381 aa)). A Protein kinase domain is found at 234–537 (IELDIVVGKG…FSEFKHHDKL (304 aa)). Residues 240–248 (VGKGRFAEV) and Lys-267 contribute to the ATP site. Asp-369 functions as the Proton acceptor in the catalytic mechanism.

Belongs to the protein kinase superfamily. TKL Ser/Thr protein kinase family. TGFB receptor subfamily. As to quaternary structure, heterohexamer; TGFB1, TGFB2 and TGFB3 homodimeric ligands assemble a functional receptor composed of two TGFBR1 and TGFBR2 heterodimers to form a ligand-receptor heterohexamer. Mg(2+) is required as a cofactor. It depends on Mn(2+) as a cofactor. Phosphorylated on a Ser/Thr residue in the cytoplasmic domain. In terms of tissue distribution, detected at low levels in embryonic heart, brain and lung. Detected at high levels in hatchling heart and lung.

The protein localises to the cell membrane. It is found in the membrane raft. The enzyme catalyses L-threonyl-[receptor-protein] + ATP = O-phospho-L-threonyl-[receptor-protein] + ADP + H(+). It carries out the reaction L-seryl-[receptor-protein] + ATP = O-phospho-L-seryl-[receptor-protein] + ADP + H(+). In terms of biological role, transmembrane serine/threonine kinase forming with the TGF-beta type I serine/threonine kinase receptor, TGFBR1, the non-promiscuous receptor for the TGF-beta cytokines TGFB1, TGFB2 and TGFB3. Transduces the TGFB1, TGFB2 and TGFB3 signal from the cell surface to the cytoplasm and is thus regulating a plethora of physiological and pathological processes including cell cycle arrest in epithelial and hematopoietic cells, control of mesenchymal cell proliferation and differentiation, wound healing, extracellular matrix production, immunosuppression and carcinogenesis. The formation of the receptor complex composed of 2 TGFBR1 and 2 TGFBR2 molecules symmetrically bound to the cytokine dimer results in the phosphorylation and the activation of TGFRB1 by the constitutively active TGFBR2. Activated TGFBR1 phosphorylates SMAD2 which dissociates from the receptor and interacts with SMAD4. The SMAD2-SMAD4 complex is subsequently translocated to the nucleus where it modulates the transcription of the TGF-beta-regulated genes. This constitutes the canonical SMAD-dependent TGF-beta signaling cascade. Also involved in non-canonical, SMAD-independent TGF-beta signaling pathways. The chain is TGF-beta receptor type-2 (TGFBR2) from Gallus gallus (Chicken).